We begin with the raw amino-acid sequence, 86 residues long: Phosphocarrier protein HPr (86 aa).

An HPr domain is found at 1–86; it reads MVKKEAIIKA…LAELIESFKE (86 aa). H15 (pros-phosphohistidine intermediate) is an active-site residue.

This sequence belongs to the HPr family.

Its subcellular location is the cytoplasm. Its function is as follows. General (non sugar-specific) component of the phosphoenolpyruvate-dependent sugar phosphotransferase system (sugar PTS). This major carbohydrate active-transport system catalyzes the phosphorylation of incoming sugar substrates concomitantly with their translocation across the cell membrane. The phosphoryl group from phosphoenolpyruvate (PEP) is transferred to the phosphoryl carrier protein HPr by enzyme I. Phospho-HPr then transfers it to the PTS EIIA domain. In Borreliella burgdorferi (strain ATCC 35210 / DSM 4680 / CIP 102532 / B31) (Borrelia burgdorferi), this protein is Phosphocarrier protein HPr (ptsH).